We begin with the raw amino-acid sequence, 467 residues long: Asparagine--tRNA ligase (467 aa).

The protein belongs to the class-II aminoacyl-tRNA synthetase family. In terms of assembly, homodimer.

The protein resides in the cytoplasm. It carries out the reaction tRNA(Asn) + L-asparagine + ATP = L-asparaginyl-tRNA(Asn) + AMP + diphosphate + H(+). This Haemophilus influenzae (strain PittGG) protein is Asparagine--tRNA ligase.